The primary structure comprises 339 residues: Serine/arginine-rich splicing factor 6 (339 aa).

Positions 2–72 (PRVYIGRLSY…ERVIVEHARG (71 aa)) constitute an RRM 1 domain. A phosphoserine mark is found at S45, S81, and S84. Positions 75-103 (RDRDGYSYGSRSGGGGYSSRRTSGRDKYG) are disordered. The RRM 2 domain occupies 110-183 (YRLIVENLSS…RNIRLIEDKP (74 aa)). An N6-acetyllysine modification is found at K165. A disordered region spans residues 176-339 (IRLIEDKPRT…RSRSRSSSRD (164 aa)). K182 is covalently cross-linked (Glycyl lysine isopeptide (Lys-Gly) (interchain with G-Cter in SUMO2)). Residues 185 to 250 (TSHRRSYSGS…RKSRSKSKSK (66 aa)) show a composition bias toward basic residues. Over residues 280-291 (SPKENGKGDIKS) the composition is skewed to basic and acidic residues. Phosphoserine is present on residues S297 and S299. The residue at position 303 (S303) is a Phosphoserine; by DYRK1A. 2 positions are modified to phosphoserine: S314 and S316. Positions 321–339 (RASRSRSRSRSRSRSSSRD) are enriched in basic residues.

This sequence belongs to the splicing factor SR family. As to quaternary structure, binds SREK1/SFRS12. Interacts with DYRK1A. Interacts with RBMY; the interaction inhibits SRSF6 pre-mRNA splicing. Post-translationally, extensively phosphorylated on serine residues in the RS domain. Phosphorylated by DYRK1A, probably in the RS domain. Phosphorylation by DYRK1A modulates alternative splice site selection and inhibits the expression of MAPT/Tau exon 10.

It is found in the nucleus. The protein resides in the nucleus speckle. Functionally, plays a role in constitutive splicing and modulates the selection of alternative splice sites. Plays a role in the alternative splicing of MAPT/Tau exon 10. Binds to alternative exons of TNC pre-mRNA and promotes the expression of alternatively spliced TNC. Plays a role in wound healing and in the regulation of keratinocyte differentiation and proliferation via its role in alternative splicing. This chain is Serine/arginine-rich splicing factor 6 (Srsf6), found in Mus musculus (Mouse).